The primary structure comprises 104 residues: Transcription factor S (104 aa).

Positions 4, 7, 20, 22, 65, 68, 93, and 96 each coordinate Zn(2+). Residues 4 to 22 (CPKCGAVMFPSEGKFKCQC) form a C4-type zinc finger. The TFIIS-type zinc finger occupies 61–101 (TRVECPKCGNMEAFWWLQQTRRADESETRFFRCTRCKHTWR).

Belongs to the archaeal RpoM/eukaryotic RPA12/RPB9/RPC11 RNA polymerase family.

Induces RNA cleavage activity in the RNA polymerase. In its presence, the cleavage activity of the RNA polymerase truncates the RNA back to position +15 in a stepwise manner by releasing mainly dinucleotides from the 3'-end of the nascent RNA. The truncated RNAs are able to continue elongation. Involved in transcriptional proofreading and fidelity. Misincorporation of nucleotides during elongation of transcription leads to arrested elongation complexes which are rescued by TFS-promoted removal of a dinucleotide from the 3'-end. TFS is able to induce a cleavage resynthesis cycle in stalled elongation complexes (resulting from the next missing nucleotide or a reduced incorporation rate of a wrong nucleotide) preventing misincorporation and enabling proofreading in a post-incorporation manner. Pausing of elongation complexes is the main determinant of TFS-induced RNA cleavage. This chain is Transcription factor S, found in Methanothermobacter thermautotrophicus (strain ATCC 29096 / DSM 1053 / JCM 10044 / NBRC 100330 / Delta H) (Methanobacterium thermoautotrophicum).